Here is a 291-residue protein sequence, read N- to C-terminus: uncharacterized protein (291 aa).

Positions 77 to 140 are disordered; sequence TVPQSSPTAI…PPTPVVEKSP (64 aa). Over residues 125–134 the composition is skewed to pro residues; it reads PVTPAHPPTP.

This is an uncharacterized protein from Synechocystis sp. (strain ATCC 27184 / PCC 6803 / Kazusa).